The sequence spans 263 residues: tRNA pseudouridine synthase A (263 aa).

Catalysis depends on aspartate 53, which acts as the Nucleophile. A substrate-binding site is contributed by tyrosine 111. The segment at 232-263 (TAPGHGLISGRSNMTNGKLENNKTTNPCVTKY) is disordered. The segment covering 241 to 263 (GRSNMTNGKLENNKTTNPCVTKY) has biased composition (polar residues).

Belongs to the tRNA pseudouridine synthase TruA family. As to quaternary structure, homodimer.

The enzyme catalyses uridine(38/39/40) in tRNA = pseudouridine(38/39/40) in tRNA. Its function is as follows. Formation of pseudouridine at positions 38, 39 and 40 in the anticodon stem and loop of transfer RNAs. The chain is tRNA pseudouridine synthase A from Halalkalibacterium halodurans (strain ATCC BAA-125 / DSM 18197 / FERM 7344 / JCM 9153 / C-125) (Bacillus halodurans).